The chain runs to 280 residues: UDP-2,3-diacylglucosamine pyrophosphatase LpxI (280 aa).

Substrate contacts are provided by residues Ala-12, 74–75 (NV), Gln-169, 187–188 (TD), Lys-214, and 226–233 (LPTIGVAT).

It belongs to the LpxI family. As to quaternary structure, homodimer. The cofactor is Mg(2+).

It localises to the cell inner membrane. It catalyses the reaction UDP-2-N,3-O-bis[(3R)-3-hydroxytetradecanoyl]-alpha-D-glucosamine + H2O = 2-N,3-O-bis[(3R)-3-hydroxytetradecanoyl]-alpha-D-glucosaminyl 1-phosphate + UMP + 2 H(+). It participates in glycolipid biosynthesis; lipid IV(A) biosynthesis; lipid IV(A) from (3R)-3-hydroxytetradecanoyl-[acyl-carrier-protein] and UDP-N-acetyl-alpha-D-glucosamine: step 4/6. Its activity is regulated as follows. Inhibited by high concentrations of Cu(2+) and Zn(2+). Completely inhibited by EDTA in vitro. Functionally, hydrolyzes the pyrophosphate bond of UDP-2,3-diacylglucosamine to form 2,3-diacylglucosamine 1-phosphate (lipid X) and UMP by catalyzing the attack of water at the beta-P atom. Involved in the biosynthesis of lipid A, a phosphorylated glycolipid that anchors the lipopolysaccharide to the outer membrane of the cell. Can functionally complement lpxH deficiency in E.coli. Cannot use CDP-diacylglycerol as substrate. The protein is UDP-2,3-diacylglucosamine pyrophosphatase LpxI of Caulobacter vibrioides (strain ATCC 19089 / CIP 103742 / CB 15) (Caulobacter crescentus).